The following is a 217-amino-acid chain: Small ribosomal subunit protein uS3 (217 aa).

In terms of domain architecture, KH type-2 spans isoleucine 40–arginine 110.

Belongs to the universal ribosomal protein uS3 family. As to quaternary structure, part of the 30S ribosomal subunit. Forms a tight complex with proteins S10 and S14.

In terms of biological role, binds the lower part of the 30S subunit head. Binds mRNA in the 70S ribosome, positioning it for translation. This is Small ribosomal subunit protein uS3 from Rickettsia bellii (strain OSU 85-389).